Reading from the N-terminus, the 736-residue chain is Catalase-peroxidase (736 aa).

The tryptophyl-tyrosyl-methioninium (Trp-Tyr) (with M-249) cross-link spans 100 to 223; that stretch reads WHSAGTYRIG…LAAVQMGLIY (124 aa). His101 serves as the catalytic Proton acceptor. The segment at residues 223–249 is a cross-link (tryptophyl-tyrosyl-methioninium (Tyr-Met) (with W-100)); that stretch reads YVNPEGPDGKPDPVAAARDIRETFRRM. His264 contributes to the heme b binding site.

Belongs to the peroxidase family. Peroxidase/catalase subfamily. In terms of assembly, homodimer or homotetramer. It depends on heme b as a cofactor. Post-translationally, formation of the three residue Trp-Tyr-Met cross-link is important for the catalase, but not the peroxidase activity of the enzyme.

It carries out the reaction H2O2 + AH2 = A + 2 H2O. The enzyme catalyses 2 H2O2 = O2 + 2 H2O. Bifunctional enzyme with both catalase and broad-spectrum peroxidase activity. In Geobacillus kaustophilus (strain HTA426), this protein is Catalase-peroxidase.